A 112-amino-acid chain; its full sequence is Lutropin subunit beta (112 aa).

Disulfide bonds link cysteine 4–cysteine 52, cysteine 18–cysteine 67, cysteine 21–cysteine 105, cysteine 29–cysteine 83, cysteine 33–cysteine 85, and cysteine 88–cysteine 95. N-linked (GlcNAc...) asparagine glycosylation occurs at asparagine 8.

It belongs to the glycoprotein hormones subunit beta family. As to quaternary structure, heterodimer of a common alpha chain and a unique beta chain which confers biological specificity to thyrotropin, lutropin, follitropin and gonadotropin.

Its subcellular location is the secreted. The chain is Lutropin subunit beta (lhb) from Aquarana catesbeiana (American bullfrog).